Here is a 206-residue protein sequence, read N- to C-terminus: Small ribosomal subunit protein uS4 (206 aa).

Residues 96-156 form the S4 RNA-binding domain; the sequence is QRLDNVVYRM…EKAKKQARIV (61 aa).

Belongs to the universal ribosomal protein uS4 family. In terms of assembly, part of the 30S ribosomal subunit. Contacts protein S5. The interaction surface between S4 and S5 is involved in control of translational fidelity.

One of the primary rRNA binding proteins, it binds directly to 16S rRNA where it nucleates assembly of the body of the 30S subunit. In terms of biological role, with S5 and S12 plays an important role in translational accuracy. In Alteromonas mediterranea (strain DSM 17117 / CIP 110805 / LMG 28347 / Deep ecotype), this protein is Small ribosomal subunit protein uS4.